A 173-amino-acid polypeptide reads, in one-letter code: NAD(P)H-quinone oxidoreductase subunit J (173 aa).

This sequence belongs to the complex I 30 kDa subunit family. As to quaternary structure, NDH-1 can be composed of about 15 different subunits; different subcomplexes with different compositions have been identified which probably have different functions.

It localises to the cellular thylakoid membrane. The enzyme catalyses a plastoquinone + NADH + (n+1) H(+)(in) = a plastoquinol + NAD(+) + n H(+)(out). It carries out the reaction a plastoquinone + NADPH + (n+1) H(+)(in) = a plastoquinol + NADP(+) + n H(+)(out). In terms of biological role, NDH-1 shuttles electrons from an unknown electron donor, via FMN and iron-sulfur (Fe-S) centers, to quinones in the respiratory and/or the photosynthetic chain. The immediate electron acceptor for the enzyme in this species is believed to be plastoquinone. Couples the redox reaction to proton translocation, and thus conserves the redox energy in a proton gradient. Cyanobacterial NDH-1 also plays a role in inorganic carbon-concentration. The sequence is that of NAD(P)H-quinone oxidoreductase subunit J from Prochlorococcus marinus (strain NATL2A).